The chain runs to 431 residues: MAFSFDLAVIFQRERRMKRKSRVTIRRRRRRDMCKSHEPMPYIPFDLVIEILTRLPAKSLMRFKSVSKLWSSLICSRTFTNRLLRVPSFIQRLYVTLTFLDNSLQRKSKLLSSSSSPGSDISTMSSFVVDRDLTTPSMKGYYLSHVLRGLMCFVKEPSVKIYNTTTRQLVVLPDIEESNIIAEDHKNKKIMYRIGHDPVGDQYKVVCIVARPNDEFGELRRYLSEHWVFILGGDKSSGWRKIPCPSPHLPITQILSINGRMHYLAWVQKFDPMLVTFDFSSEEISILQAPEDIRWFKSNPIEYYGKVALLNLSDLKRECTMNLWVMEDVEKNMWSEKTLVVHPSQMDIVKSTSLRVAGTTRNNEVILVPHNIRYTLTGEVIVEPQNTTLLYIFLYDLQKNLMRKVEIKEPPYHTKFWDVVGLDDVENFMYL.

The F-box domain occupies 37 to 83; the sequence is HEPMPYIPFDLVIEILTRLPAKSLMRFKSVSKLWSSLICSRTFTNRL. Kelch repeat units lie at residues 143 to 189 and 227 to 275; these read LSHV…KNKK and WVFI…PMLV.

This chain is F-box/kelch-repeat protein At4g19930, found in Arabidopsis thaliana (Mouse-ear cress).